A 527-amino-acid polypeptide reads, in one-letter code: Glucose-6-phosphate isomerase (527 aa).

E323 serves as the catalytic Proton donor. Catalysis depends on residues H352 and K454.

Belongs to the GPI family.

It localises to the cytoplasm. The catalysed reaction is alpha-D-glucose 6-phosphate = beta-D-fructose 6-phosphate. Its pathway is carbohydrate biosynthesis; gluconeogenesis. It participates in carbohydrate degradation; glycolysis; D-glyceraldehyde 3-phosphate and glycerone phosphate from D-glucose: step 2/4. Its function is as follows. Catalyzes the reversible isomerization of glucose-6-phosphate to fructose-6-phosphate. This chain is Glucose-6-phosphate isomerase, found in Prochlorococcus marinus (strain MIT 9215).